A 252-amino-acid chain; its full sequence is Small ribosomal subunit protein uS2A (252 aa).

The residue at position 2 (S2) is an N-acetylserine. The tract at residues 209-252 (EVEQQAAEETTSTGADAEESKEEVAEGQNEASEWAEENTEAVSW) is disordered. Residues 241–252 (EWAEENTEAVSW) show a composition bias toward acidic residues.

Belongs to the universal ribosomal protein uS2 family. Component of the small ribosomal subunit. Mature ribosomes consist of a small (40S) and a large (60S) subunit. The 40S subunit contains about 33 different proteins and 1 molecule of RNA (18S). The 60S subunit contains about 49 different proteins and 3 molecules of RNA (25S, 5.8S and 5S). Interacts with RPS21.

It is found in the cytoplasm. Required for the assembly and/or stability of the 40S ribosomal subunit. Required for the processing of the 20S rRNA-precursor to mature 18S rRNA in a late step of the maturation of 40S ribosomal subunits. This chain is Small ribosomal subunit protein uS2A, found in Vanderwaltozyma polyspora (strain ATCC 22028 / DSM 70294 / BCRC 21397 / CBS 2163 / NBRC 10782 / NRRL Y-8283 / UCD 57-17) (Kluyveromyces polysporus).